Here is a 317-residue protein sequence, read N- to C-terminus: Transcription factor EC (317 aa).

Positions 1 to 90 (MTLDHRLFSQ…GLMNASCPSI (90 aa)) are necessary for transcriptional transactivation. The bHLH domain occupies 110 to 163 (QKKDNHNLIERRRRYNINYRIKELGTLIPKSNDPDIRWNKGTILKASVDYIKWL). The necessary for transcriptional transactivation stretch occupies residues 242-317 (TSPEFYEQAV…SLSSEDGDEL (76 aa)).

This sequence belongs to the MiT/TFE family. In terms of assembly, homodimer. Forms heterodimers with TFE3. Forms heterodimers with MITF. Interacts with MITF. Expressed in kidney, spleen, lung, liver, testis and muscle.

The protein resides in the nucleus. Its function is as follows. Transcriptional regulator that acts as a repressor or an activator. Acts as a transcriptional repressor on minimal promoter containing mu E3 enhancer sequence. Binds to mu E3 DNA sequence of the immunoglobulin heavy-chain gene enhancer. Acts as a transcriptional transactivator on the proximal promoter region of the tartrate-resistant acid phosphatase (TRAP) E-box containing promoter. Collaborates with MITF in target gene activation. Acts as a transcriptional repressor on minimal promoter containing mu E3 enhancer sequence. Binds to mu E3 DNA sequence of the immunoglobulin heavy-chain gene enhancer. Binds DNA in a homo- or heterodimeric form. The chain is Transcription factor EC (Tfec) from Rattus norvegicus (Rat).